The sequence spans 616 residues: MRDFLKLLKKHDELKIIDTPLEVDLEIAHLAYIEAKKPNGGKALLFTQPIRKEHNQIKTFGMPVLMNAFGSFKRLDLLLKTPIEDLQQRMQAFLHFDAPKNFTESLKILKDLWDLRHVFPKKTARPKDLITKQDKEVNLWDLPVLKTWEKDGGAFITMGQVYTQSLDHKKKNLGMYRLQVYDKNHLGLHWQIHKDSQLFFHEYAKAKVKMPISIAIGGDLLYTWCATAPLPYGIYELMLYGFIREKKARVMPCLSNPLSVPSDCDIVIEGFVDCEKLELEGPFGDHTGYYTPIEPYPVLEVKTISYKKDSIYLATVVGKPPLEDKYMGYLTERLFLPLLQTHAPNLIDYYMPENGVFHNLILAKIHTRYNAHAKQVMHAFWGVGQMSFVKHAIFVNEDAPNLRDTNAIIEYILENFSKENALISQGVCDALDHASPEYAMGGKLGIDATSKSNTPYPTLLNDNALLALLQDKMQNIVLLKQYYPHTRNPICVISVEKKDKSVIELAKNLLGFEEHLRIVIFVEHASNDLNNPYMLLWRIVNNIDAKRDILTSKHCFFIDATNKGVMDKHFREWPTETNCSMEVIENLKKKGLLKDFETLNQKFHLTHSFSTHKEDL.

Belongs to the UbiD family.

This is an uncharacterized protein from Helicobacter pylori (strain J99 / ATCC 700824) (Campylobacter pylori J99).